The sequence spans 444 residues: Dihydroorotate dehydrogenase (quinone), mitochondrial (444 aa).

The chain crosses the membrane as a helical span at residues 34-56 (GGASRYIIGTASVLVGAMAGFYI). Residues 124–128 (AGLDK) and Thr-148 each bind FMN. Position 128 (Lys-128) interacts with substrate. 173–177 (NRYGF) contacts substrate. FMN-binding residues include Asn-220 and Asn-250. 250-255 (NVSSPN) contacts substrate. Catalysis depends on Ser-253, which acts as the Nucleophile. FMN contacts are provided by Lys-301 and Ser-329. 330–331 (NT) serves as a coordination point for substrate. FMN is bound by residues Gly-355, Gly-385, and 406-407 (YT).

The protein belongs to the dihydroorotate dehydrogenase family. Type 2 subfamily. The cofactor is FMN.

Its subcellular location is the mitochondrion inner membrane. The catalysed reaction is (S)-dihydroorotate + a quinone = orotate + a quinol. The protein operates within pyrimidine metabolism; UMP biosynthesis via de novo pathway; orotate from (S)-dihydroorotate (quinone route): step 1/1. Catalyzes the conversion of dihydroorotate to orotate with quinone as electron acceptor. The sequence is that of Dihydroorotate dehydrogenase (quinone), mitochondrial (URA9) from Eremothecium gossypii (strain ATCC 10895 / CBS 109.51 / FGSC 9923 / NRRL Y-1056) (Yeast).